A 203-amino-acid polypeptide reads, in one-letter code: MVRLNVKPTRMELNNLKERLTTAERGHKLLKDKRDELMRRFISLIRENNQLRKEVESYLIDNLKSFAVAKSLKNSQMVEELFSIPSKEIELFVEKENIMSVTVPRMHMNITSQNENSEYSYLSSNSEMDDVFATMNSLIYKLLRLAEVEKTCQLMADEIEKTRRRVNGLEYSIIPNLSETIHYIELKLEEAERANLVRIMKVK.

It belongs to the V-ATPase D subunit family.

Functionally, produces ATP from ADP in the presence of a proton gradient across the membrane. The chain is V-type ATP synthase subunit D from Streptococcus pneumoniae serotype 19F (strain G54).